A 390-amino-acid chain; its full sequence is Chorismate synthase (390 aa).

Residues R39 and R45 each contribute to the NADP(+) site. FMN is bound by residues 132-134, 253-254, G298, 313-317, and R339; these read RSS, NA, and KPIPT.

It belongs to the chorismate synthase family. Homotetramer. FMNH2 is required as a cofactor.

It carries out the reaction 5-O-(1-carboxyvinyl)-3-phosphoshikimate = chorismate + phosphate. Its pathway is metabolic intermediate biosynthesis; chorismate biosynthesis; chorismate from D-erythrose 4-phosphate and phosphoenolpyruvate: step 7/7. Its function is as follows. Catalyzes the anti-1,4-elimination of the C-3 phosphate and the C-6 proR hydrogen from 5-enolpyruvylshikimate-3-phosphate (EPSP) to yield chorismate, which is the branch point compound that serves as the starting substrate for the three terminal pathways of aromatic amino acid biosynthesis. This reaction introduces a second double bond into the aromatic ring system. This is Chorismate synthase from Bacillus pumilus (strain SAFR-032).